Reading from the N-terminus, the 86-residue chain is Small ribosomal subunit protein uS15 (86 aa).

The protein belongs to the universal ribosomal protein uS15 family. In terms of assembly, part of the 30S ribosomal subunit. Forms a bridge to the 50S subunit in the 70S ribosome, contacting the 23S rRNA.

In terms of biological role, one of the primary rRNA binding proteins, it binds directly to 16S rRNA where it helps nucleate assembly of the platform of the 30S subunit by binding and bridging several RNA helices of the 16S rRNA. Functionally, forms an intersubunit bridge (bridge B4) with the 23S rRNA of the 50S subunit in the ribosome. The chain is Small ribosomal subunit protein uS15 from Ruthia magnifica subsp. Calyptogena magnifica.